The chain runs to 229 residues: Glutathione S-transferase 3 (229 aa).

Residue A2 is modified to Blocked amino end (Ala). Positions 3–83 constitute a GST N-terminal domain; it reads AKPVLYYFNG…YIAGKYNLYG (81 aa). Residues Y9, 54 to 55, and 67 to 68 each bind glutathione; these read QV and QT. Positions 85-207 constitute a GST C-terminal domain; the sequence is DLKERALIDM…LAPGSKRKPI (123 aa).

This sequence belongs to the GST superfamily. Alpha family. As to quaternary structure, homodimer or heterodimer (with a subunit from group CL-4).

It localises to the cytoplasm. It catalyses the reaction RX + glutathione = an S-substituted glutathione + a halide anion + H(+). In terms of biological role, catalyzes the conjugation of GSH to a wide variety of electrophilic alkylating agents. Also involved in the metabolism of lipid hydroperoxides, prostaglandins and leukotriene A4 and in binding of non-substrate hydrophobic ligands such as bile acids, a number of drugs and thyroid hormones. This GST does not exhibit peroxidase activity. This chain is Glutathione S-transferase 3, found in Gallus gallus (Chicken).